Here is a 176-residue protein sequence, read N- to C-terminus: Ribosome maturation factor RimM (176 aa).

The 80-residue stretch at 97-176 (EDEFYWRDLI…QILVDWDPDF (80 aa)) folds into the PRC barrel domain.

Belongs to the RimM family. In terms of assembly, binds ribosomal protein uS19.

It localises to the cytoplasm. Its function is as follows. An accessory protein needed during the final step in the assembly of 30S ribosomal subunit, possibly for assembly of the head region. Essential for efficient processing of 16S rRNA. May be needed both before and after RbfA during the maturation of 16S rRNA. It has affinity for free ribosomal 30S subunits but not for 70S ribosomes. The polypeptide is Ribosome maturation factor RimM (Shewanella halifaxensis (strain HAW-EB4)).